The following is a 502-amino-acid chain: MEIRAEEISEIIRKQIKEYGTEVAVAETGTIISIGDGIARIHGLDKAMAGELLEFPGGISGMVLNLEEDNVGAAILGEFSEIKEGDTVKRTGKIVEVPVGEALIGRVVNALGQPIDGKGPINTDKFGKVEVKAPGIVQRKSVHQPMQTGLKAIDSMVPIGRGQRELIIGDRQTGKTAVAIDTIINQKGGDVVCIYVAIGQKRSTVAQVVSKLQEHGAMDYTIIVAATASEPAPLQFISPYTGVTMGEYFRDSGKHALIIYDDLSKQAVAYRQLSLLLRRPPGREAYPGDVFYLHSRLLERACKVSDACGAGSLTALPIIETQAGDVSAYIPTNVISITDGQIYLESDLFYSGVRPAINVGLSVSRVGGSAQVKAMKQVAGTLRLSLAQYREMAAFAQFGSDLDKATQMQLARGERLVEILKQPQYKPVPNEKQVLIIFAANNGFIDDYPVSALRRYETELYTFFDTRKADVLADLRDKKAIDDDIKGKIVAALNEFKKEFTA.

Residue 169–176 (GDRQTGKT) participates in ATP binding.

Belongs to the ATPase alpha/beta chains family. In terms of assembly, F-type ATPases have 2 components, CF(1) - the catalytic core - and CF(0) - the membrane proton channel. CF(1) has five subunits: alpha(3), beta(3), gamma(1), delta(1), epsilon(1). CF(0) has three main subunits: a(1), b(2) and c(9-12). The alpha and beta chains form an alternating ring which encloses part of the gamma chain. CF(1) is attached to CF(0) by a central stalk formed by the gamma and epsilon chains, while a peripheral stalk is formed by the delta and b chains.

The protein resides in the cell inner membrane. It catalyses the reaction ATP + H2O + 4 H(+)(in) = ADP + phosphate + 5 H(+)(out). Its function is as follows. Produces ATP from ADP in the presence of a proton gradient across the membrane. The alpha chain is a regulatory subunit. The polypeptide is ATP synthase subunit alpha (Geotalea uraniireducens (strain Rf4) (Geobacter uraniireducens)).